We begin with the raw amino-acid sequence, 567 residues long: Probable serine/threonine-protein kinase WNK6 (567 aa).

One can recognise a Protein kinase domain in the interval 28 to 285; the sequence is IRYKEVIGKG…AKELLLDPFL (258 aa). ATP contacts are provided by residues 108-111 and Lys-158; that span reads TELF. Catalysis depends on Asp-175, which acts as the Proton acceptor. Over residues 499-509 the composition is skewed to basic and acidic residues; sequence VDATKGEDKSS. A disordered region spans residues 499–528; that stretch reads VDATKGEDKSSIQEVEEATEPVSLEEEERL. The segment covering 512-525 has biased composition (acidic residues); that stretch reads EVEEATEPVSLEEE. The stretch at 519 to 553 forms a coiled coil; that stretch reads PVSLEEEERLRQELEEIEAKYQEDMKEIATKREEA.

The protein belongs to the protein kinase superfamily. Ser/Thr protein kinase family. WNK subfamily.

The enzyme catalyses L-seryl-[protein] + ATP = O-phospho-L-seryl-[protein] + ADP + H(+). It catalyses the reaction L-threonyl-[protein] + ATP = O-phospho-L-threonyl-[protein] + ADP + H(+). In terms of biological role, may regulate flowering time by modulating the photoperiod pathway. The sequence is that of Probable serine/threonine-protein kinase WNK6 (WNK6) from Arabidopsis thaliana (Mouse-ear cress).